The following is a 323-amino-acid chain: tRNA dimethylallyltransferase (323 aa).

Residue 12 to 19 (GPTAAGKT) coordinates ATP. 14-19 (TAAGKT) serves as a coordination point for substrate. Interaction with substrate tRNA regions lie at residues 37 to 40 (DSAL) and 161 to 165 (QRLIR).

It belongs to the IPP transferase family. As to quaternary structure, monomer. The cofactor is Mg(2+).

The enzyme catalyses adenosine(37) in tRNA + dimethylallyl diphosphate = N(6)-dimethylallyladenosine(37) in tRNA + diphosphate. Its function is as follows. Catalyzes the transfer of a dimethylallyl group onto the adenine at position 37 in tRNAs that read codons beginning with uridine, leading to the formation of N6-(dimethylallyl)adenosine (i(6)A). This Pseudomonas savastanoi pv. phaseolicola (strain 1448A / Race 6) (Pseudomonas syringae pv. phaseolicola (strain 1448A / Race 6)) protein is tRNA dimethylallyltransferase.